The primary structure comprises 112 residues: ATP-dependent Clp protease adapter protein ClpS (112 aa).

The protein belongs to the ClpS family. In terms of assembly, binds to the N-terminal domain of the chaperone ClpA.

Functionally, involved in the modulation of the specificity of the ClpAP-mediated ATP-dependent protein degradation. The polypeptide is ATP-dependent Clp protease adapter protein ClpS (Rhodococcus jostii (strain RHA1)).